Consider the following 588-residue polypeptide: MKRDRDRDREREKRAFSNGAVSSGKSKIWEEDEEEKPDAGMDELLAVLGYKVKSSDMADVAQKLEQLEMAMGTTMEDGITHLSTDTVHKNPSDMAGWVQSMLSSISTNFDMCNQENDVLVSGCGSSSSIIDFSQNHRTSTISDDDLRAIPGGAVFNSDSNKRHRSTTSSFSTTSSSMVTDSSATRPVVLVDSQETGVRLVHTLMACAEAVQQENLTLADQLVRHIGILAVSQSGAMRKVATYFAEALARRIYKIYPQDSMESSYTDVLQMHFYETCPYLKFAHFTANQAILEAFTGCNKVHVIDFSLKQGMQWPALMQALALRPGGPPAFRLTGIGPPQPDNTDALQQVGWKLAQLAETIGVEFEFRGFVANSLADLDATILDIRPSETEAVAINSVFELHRLLSRPGAIEKVLNSIKQINPKIVTLVEQEANHNAGVFIDRFNEALHYYSTMFDSLESSGSSSSASPTGILPQPPVNNQDLVMSEVYLGRQICNVVACEGSDRVERHETLNQWRVRMNSSGFDPVHLGSNAFKQASMLLALFAGGDGYRVEENDGCLMLGWHTRPLIATSAWKLLPDSGTGAGEVEL.

The span at 1-15 (MKRDRDRDREREKRA) shows a compositional bias: basic and acidic residues. The disordered stretch occupies residues 1-38 (MKRDRDRDREREKRAFSNGAVSSGKSKIWEEDEEEKPD). Residues 42–46 (DELLA) carry the DELLA motif motif. A disordered region spans residues 152–177 (GAVFNSDSNKRHRSTTSSFSTTSSSM). The segment covering 166 to 177 (TTSSFSTTSSSM) has biased composition (low complexity). One can recognise a GRAS domain in the interval 190-574 (VDSQETGVRL…RPLIATSAWK (385 aa)). The interval 197–251 (VRLVHTLMACAEAVQQENLTLADQLVRHIGILAVSQSGAMRKVATYFAEALARRI) is leucine repeat I (LRI). The tract at residues 269–334 (QMHFYETCPY…GGPPAFRLTG (66 aa)) is VHIID. Residues 300 to 304 (VHVID) carry the VHIID motif. The tract at residues 348-380 (QVGWKLAQLAETIGVEFEFRGFVANSLADLDAT) is leucine repeat II (LRII). The interval 392-495 (VAINSVFELH…EVYLGRQICN (104 aa)) is PFYRE. An LXXLL motif motif is present at residues 400–404 (LHRLL). An SAW region spans residues 498-574 (ACEGSDRVER…RPLIATSAWK (77 aa)).

The protein belongs to the GRAS family. DELLA subfamily. Post-translationally, phosphorylated. In terms of processing, ubiquitinated. Upon GA application it is ubiquitinated, leading to its subsequent degradation. As to expression, expressed in both vegetative and reproductive tissues.

The protein localises to the nucleus. Functionally, probable transcriptional regulator that acts as a repressor of the gibberellin (GA) signaling pathway. Probably acts by participating in large multiprotein complexes that repress transcription of GA-inducible genes. Upon GA application, it is degraded by the proteasome, allowing the GA signaling pathway. Its degradation is not essential for germination. The sequence is that of DELLA protein GAI (GAI) from Solanum lycopersicum (Tomato).